Here is a 78-residue protein sequence, read N- to C-terminus: Translation initiation factor IF-1, chloroplastic (78 aa).

Residues 1-72 (MEKQKLIDME…TKGRITYRLR (72 aa)) enclose the S1-like domain.

Belongs to the IF-1 family. As to quaternary structure, component of the 30S ribosomal translation pre-initiation complex which assembles on the 30S ribosome in the order IF-2 and IF-3, IF-1 and N-formylmethionyl-tRNA(fMet); mRNA recruitment can occur at any time during PIC assembly.

Its subcellular location is the plastid. It is found in the chloroplast. In terms of biological role, one of the essential components for the initiation of protein synthesis. Stabilizes the binding of IF-2 and IF-3 on the 30S subunit to which N-formylmethionyl-tRNA(fMet) subsequently binds. Helps modulate mRNA selection, yielding the 30S pre-initiation complex (PIC). Upon addition of the 50S ribosomal subunit IF-1, IF-2 and IF-3 are released leaving the mature 70S translation initiation complex. The sequence is that of Translation initiation factor IF-1, chloroplastic from Marchantia polymorpha (Common liverwort).